Here is a 601-residue protein sequence, read N- to C-terminus: ATP-dependent rRNA helicase SPB4 (601 aa).

A Q motif motif is present at residues 14-42; sequence LAWSQASLQPWIHDAIDSLGFRSMTPVQA. Residues 45–228 form the Helicase ATP-binding domain; it reads IPLFCGNKDV…RTGMSNPVKI (184 aa). ATP is bound at residue 58–65; the sequence is AVTGSGKT. The short motif at 176-179 is the DEAD box element; that stretch reads DEAD. The Helicase C-terminal domain maps to 257–419; that stretch reads VLINMLSTLQ…AYKAFSKNLR (163 aa). Residues 507–575 adopt a coiled-coil conformation; it reads KEKIRLETME…QIMNESSDEE (69 aa). The span at 532 to 554 shows a compositional bias: basic and acidic residues; that stretch reads LKVKNEAWSSKNEKKEGKQERRE. Residues 532-576 form a disordered region; it reads LKVKNEAWSSKNEKKEGKQERREKMKRKREAIEKQIMNESSDEET.

It belongs to the DEAD box helicase family. DDX55/SPB4 subfamily. As to quaternary structure, component of pre-60S ribosomal complexes.

The protein resides in the nucleus. It is found in the nucleolus. The catalysed reaction is ATP + H2O = ADP + phosphate + H(+). Its function is as follows. ATP-binding RNA helicase involved in the biogenesis of 60S ribosomal subunits. Binds 90S pre-ribosomal particles and dissociates from pre-60S ribosomal particles after processing of 27SB pre-rRNA. Required for the normal formation of 18S rRNA through the processing of pre-rRNAs at sites A0, A1 and A2, and the normal formation of 25S and 5.8S rRNAs through the processing of pre-rRNAs at sites C1 and C2. The chain is ATP-dependent rRNA helicase SPB4 from Meyerozyma guilliermondii (strain ATCC 6260 / CBS 566 / DSM 6381 / JCM 1539 / NBRC 10279 / NRRL Y-324) (Yeast).